The following is a 140-amino-acid chain: Prepilin peptidase-dependent protein A (140 aa).

Residues 1–23 constitute a propeptide that is removed on maturation; that stretch reads MLLLKASAICGKGNEGKRNKKGG. An N-methylphenylalanine modification is found at phenylalanine 24. A helical membrane pass occupies residues 24 to 44; it reads FTLIELTVVLAIMAIILMVIA.

It localises to the membrane. In terms of biological role, not yet known. The polypeptide is Prepilin peptidase-dependent protein A (ppdA) (Clostridium perfringens (strain 13 / Type A)).